The chain runs to 225 residues: 3-dehydroquinate dehydratase (225 aa).

Residues 30 to 32 (EWR) and arginine 62 contribute to the 3-dehydroquinate site. Residue histidine 118 is the Proton donor/acceptor of the active site. The Schiff-base intermediate with substrate role is filled by lysine 143. The 3-dehydroquinate site is built by arginine 186 and glutamine 209.

This sequence belongs to the type-I 3-dehydroquinase family. Homodimer.

The enzyme catalyses 3-dehydroquinate = 3-dehydroshikimate + H2O. The protein operates within metabolic intermediate biosynthesis; chorismate biosynthesis; chorismate from D-erythrose 4-phosphate and phosphoenolpyruvate: step 3/7. Its function is as follows. Involved in the third step of the chorismate pathway, which leads to the biosynthesis of aromatic amino acids. Catalyzes the cis-dehydration of 3-dehydroquinate (DHQ) and introduces the first double bond of the aromatic ring to yield 3-dehydroshikimate. The protein is 3-dehydroquinate dehydratase of Streptococcus agalactiae serotype Ia (strain ATCC 27591 / A909 / CDC SS700).